The following is a 183-amino-acid chain: Dual-action ribosomal maturation protein DarP (183 aa).

Residues 1–27 (MSSHSQEPVGEENFDDSEYDRPNKSQV) are disordered. Acidic residues predominate over residues 9–18 (VGEENFDDSE).

This sequence belongs to the DarP family.

The protein resides in the cytoplasm. In terms of biological role, member of a network of 50S ribosomal subunit biogenesis factors which assembles along the 30S-50S interface, preventing incorrect 23S rRNA structures from forming. Promotes peptidyl transferase center (PTC) maturation. The protein is Dual-action ribosomal maturation protein DarP of Bordetella pertussis (strain Tohama I / ATCC BAA-589 / NCTC 13251).